A 426-amino-acid chain; its full sequence is MQQIRAIVGTQWGDEGKGKIVDFLAKEADVVVRAQGGNNAGHTVEAFGKVFKLHLIPSGILYKDKLNIIGNGVVIDPESLIQEIESLEKEGISTENLKISDRAHLVMPYHKILDEEQERLRGEESLGTTKRGIGPAYTDKTERTNLRVCDMLDEEEFVQKLRTVYERKNQILTHVYHKTPMKFGELLEQFMKYGEILKPYITDTIKLLNDSIKAGKKVLLEGAQATMLDLDYGTYPYVTSSHPTVGGFCIGAGIAPKYIQEVIGVVKAYTTRVGKGPFPTELLDEIGNSIREKGREYGTTTGRPRRCGWLDLVVVRYAVLINGIDKIALTKLDTLSGLPKIKVCVGYKYEGKVLDLFPASLRVARECEPVYEEFEGWSEEEIKAAKEYEALPKSAKRYIEFIEKETGAKVFLIGTGPAREDIIIKD.

GTP contacts are provided by residues G13–K19 and G41–T43. The active-site Proton acceptor is the D14. Residues D14 and G41 each contribute to the Mg(2+) site. Residues D14 to K17, N39 to H42, T129, R143, Q224, T239, and R303 each bind IMP. H42 functions as the Proton donor in the catalytic mechanism. A substrate-binding site is contributed by T299–R305. GTP is bound by residues R305, K331–D333, and G414–G416.

Belongs to the adenylosuccinate synthetase family. As to quaternary structure, homodimer. Requires Mg(2+) as cofactor.

It is found in the cytoplasm. It carries out the reaction IMP + L-aspartate + GTP = N(6)-(1,2-dicarboxyethyl)-AMP + GDP + phosphate + 2 H(+). Its pathway is purine metabolism; AMP biosynthesis via de novo pathway; AMP from IMP: step 1/2. Plays an important role in the de novo pathway of purine nucleotide biosynthesis. Catalyzes the first committed step in the biosynthesis of AMP from IMP. This chain is Adenylosuccinate synthetase, found in Caldicellulosiruptor bescii (strain ATCC BAA-1888 / DSM 6725 / KCTC 15123 / Z-1320) (Anaerocellum thermophilum).